A 252-amino-acid chain; its full sequence is 5'-nucleotidase SurE (252 aa).

4 residues coordinate a divalent metal cation: aspartate 8, aspartate 9, serine 39, and asparagine 95.

It belongs to the SurE nucleotidase family. The cofactor is a divalent metal cation.

It localises to the cytoplasm. It carries out the reaction a ribonucleoside 5'-phosphate + H2O = a ribonucleoside + phosphate. Functionally, nucleotidase that shows phosphatase activity on nucleoside 5'-monophosphates. In Clostridium botulinum (strain Okra / Type B1), this protein is 5'-nucleotidase SurE.